The sequence spans 275 residues: Photosystem II extrinsic protein O (275 aa).

Residues 1–28 form the signal peptide; it reads MRFRTLLIAFLALCLGLITACSEGPANA.

It belongs to the PsbO family. PSII is composed of 1 copy each of membrane proteins PsbA, PsbB, PsbC, PsbD, PsbE, PsbF, PsbH, PsbI, PsbJ, PsbK, PsbL, PsbM, PsbT, PsbX, PsbY, PsbZ, Psb30/Ycf12, peripheral proteins PsbO, CyanoQ (PsbQ), PsbU, PsbV and a large number of cofactors. It forms dimeric complexes.

Its subcellular location is the cellular thylakoid membrane. One of the extrinsic, lumenal subunits of photosystem II (PSII), which stabilize and protect the oxygen-evolving complex. PSII is a light-driven water plastoquinone oxidoreductase, using light energy to abstract electrons from H(2)O, generating a proton gradient subsequently used for ATP formation. Required for dimerization of PSII and for binding of PsbQ to PSII. This is Photosystem II extrinsic protein O from Crocosphaera subtropica (strain ATCC 51142 / BH68) (Cyanothece sp. (strain ATCC 51142)).